Reading from the N-terminus, the 148-residue chain is Large-conductance mechanosensitive channel (148 aa).

The next 3 membrane-spanning stretches (helical) occupy residues 21-41 (IDLA…DSVV), 45-65 (IMPL…KFLV), and 92-112 (GNFL…FIIV).

It belongs to the MscL family. Homopentamer.

It is found in the cell inner membrane. Channel that opens in response to stretch forces in the membrane lipid bilayer. May participate in the regulation of osmotic pressure changes within the cell. The chain is Large-conductance mechanosensitive channel from Bordetella petrii (strain ATCC BAA-461 / DSM 12804 / CCUG 43448).